Here is a 167-residue protein sequence, read N- to C-terminus: Periplasmic nitrate reductase, electron transfer subunit (167 aa).

The N-terminal stretch at 1–34 (MRRAHRAGERVMMKRFGIALLAVAIAAGASSLTA) is a signal peptide. Positions 40 to 65 (GLHGPAPLNDEGPAPPMLPNRNTSER) are disordered. Heme c-binding residues include His79, Cys93, Cys96, His97, His114, Cys133, Cys136, and His137.

The protein belongs to the NapB family. As to quaternary structure, component of the periplasmic nitrate reductase NapAB complex composed of NapA and NapB. Post-translationally, binds 2 heme C groups per subunit.

It localises to the periplasm. Electron transfer subunit of the periplasmic nitrate reductase complex NapAB. Receives electrons from the membrane-anchored tetraheme c-type NapC protein and transfers these to NapA subunit, thus allowing electron flow between membrane and periplasm. Essential for periplasmic nitrate reduction with nitrate as the terminal electron acceptor. This chain is Periplasmic nitrate reductase, electron transfer subunit, found in Bradyrhizobium japonicum.